Here is a 372-residue protein sequence, read N- to C-terminus: Putative glutamate--cysteine ligase 2 (372 aa).

The protein belongs to the glutamate--cysteine ligase type 2 family. YbdK subfamily. As to quaternary structure, homodimer.

The enzyme catalyses L-cysteine + L-glutamate + ATP = gamma-L-glutamyl-L-cysteine + ADP + phosphate + H(+). In terms of biological role, ATP-dependent carboxylate-amine ligase which exhibits weak glutamate--cysteine ligase activity. This Salmonella paratyphi A (strain AKU_12601) protein is Putative glutamate--cysteine ligase 2 (ybdK).